The sequence spans 1597 residues: Transmembrane protein 131-like (1597 aa).

An N-terminal signal peptide occupies residues 1-40 (MAGLRRPQSGAYRRTAAAVNLLLGVFQVLLSCCRPGGAQG). Residues 41 to 869 (QAFEPLPNVV…VVPGPSWEES (829 aa)) are Extracellular-facing. 4 N-linked (GlcNAc...) asparagine glycosylation sites follow: Asn343, Asn593, Asn709, and Asn846. The segment at 696 to 916 (DYGKVTSLIL…QNGSSSSQQN (221 aa)) is required for Wnt-signaling inhibition and LRP6 degradation. Residues 870–890 (FWRLTVFFVSLSLLGVILIAF) traverse the membrane as a helical segment. Residues 891–1597 (QQAQYILMEF…SRDSSYCGNM (707 aa)) are Cytoplasmic-facing. Residues 907 to 917 (QNGSSSSQQNG) show a composition bias toward low complexity. Disordered regions lie at residues 907-928 (QNGSSSSQQNGDPVAMISSHPH), 1096-1240 (AELK…EQRL), and 1252-1322 (DGAG…SDCD). Over residues 1213-1222 (RPCRRNKKRA) the composition is skewed to basic residues. Over residues 1223–1239 (SAQASSSPRPSEQSEQR) the composition is skewed to low complexity. Positions 1269-1290 (PERREEDSYYQKSEKKCADKFC) are enriched in basic and acidic residues. The span at 1291 to 1319 (SDSSSDCGSSSGSVRASRGSWGSWSSSSS) shows a compositional bias: low complexity.

This sequence belongs to the TMEM131 family.

Its subcellular location is the cell membrane. The protein localises to the endoplasmic reticulum. It is found in the cytoplasm. Functionally, in its membrane-associated form, antagonizes canonical Wnt signaling by triggering lysosome-dependent degradation of Wnt-activated LRP6. Regulates thymocyte proliferation. The polypeptide is Transmembrane protein 131-like (Mus musculus (Mouse)).